Here is a 464-residue protein sequence, read N- to C-terminus: Argininosuccinate lyase (464 aa).

Ala2 carries the post-translational modification N-acetylalanine. Residue Lys7 is modified to N6-acetyllysine. A 2-(N(omega)-L-arginino)succinate-binding site is contributed by Ser27. Lys69 is modified (N6-acetyllysine). 2-(N(omega)-L-arginino)succinate is bound by residues Asn114 and Thr159. His160 serves as the catalytic Proton acceptor. Ser281 functions as the Proton donor in the catalytic mechanism. At Lys288 the chain carries N6-acetyllysine. Residues Asn289, Tyr321, Gln326, and Lys329 each contribute to the 2-(N(omega)-L-arginino)succinate site.

It belongs to the lyase 1 family. Argininosuccinate lyase subfamily. In terms of assembly, homotetramer. Forms tissue-specific complexes with ASS1, SLC7A1, HSP90AA1 and nitric oxide synthase NOS1, NOS2 or NOS3; the complex maintenance is independent of ASL catalytic function. In terms of processing, acetylation modifies enzyme activity in response to alterations of extracellular nutrient availability. Acetylation increased with trichostin A (TSA) or with nicotinamide (NAM). Glucose increases acetylation by about a factor of 3 with decreasing enzyme activity. Acetylation on Lys-288 is decreased on the addition of extra amino acids resulting in activation of enzyme activity.

It carries out the reaction 2-(N(omega)-L-arginino)succinate = fumarate + L-arginine. It functions in the pathway amino-acid biosynthesis; L-arginine biosynthesis; L-arginine from L-ornithine and carbamoyl phosphate: step 3/3. The protein operates within nitrogen metabolism; urea cycle; L-arginine and fumarate from (N(omega)-L-arginino)succinate: step 1/1. Its activity is regulated as follows. Enzyme activity is regulated by acetylation. Catalyzes the reversible cleavage of L-argininosuccinate to fumarate and L-arginine, an intermediate step reaction in the urea cycle mostly providing for hepatic nitrogen detoxification into excretable urea as well as de novo L-arginine synthesis in nonhepatic tissues. Essential regulator of intracellular and extracellular L-arginine pools. As part of citrulline-nitric oxide cycle, forms tissue-specific multiprotein complexes with argininosuccinate synthase ASS1, transport protein SLC7A1 and nitric oxide synthase NOS1, NOS2 or NOS3, allowing for cell-autonomous L-arginine synthesis while channeling extracellular L-arginine to nitric oxide synthesis pathway. The chain is Argininosuccinate lyase (ASL) from Macaca fascicularis (Crab-eating macaque).